The sequence spans 230 residues: 3,4-dihydroxy-2-butanone 4-phosphate synthase (230 aa).

D-ribulose 5-phosphate contacts are provided by residues Arg42–Glu43, Asp47, Arg155–Thr159, and Glu179. Glu43 is a binding site for Mg(2+). His158 lines the Mg(2+) pocket.

It belongs to the DHBP synthase family. As to quaternary structure, homodimer. The cofactor is Mg(2+). Mn(2+) is required as a cofactor.

The catalysed reaction is D-ribulose 5-phosphate = (2S)-2-hydroxy-3-oxobutyl phosphate + formate + H(+). The protein operates within cofactor biosynthesis; riboflavin biosynthesis; 2-hydroxy-3-oxobutyl phosphate from D-ribulose 5-phosphate: step 1/1. Catalyzes the conversion of D-ribulose 5-phosphate to formate and 3,4-dihydroxy-2-butanone 4-phosphate. The sequence is that of 3,4-dihydroxy-2-butanone 4-phosphate synthase from Bordetella pertussis (strain Tohama I / ATCC BAA-589 / NCTC 13251).